The primary structure comprises 340 residues: Cobalt-precorrin-5B C(1)-methyltransferase (340 aa).

The protein belongs to the CbiD family.

The catalysed reaction is Co-precorrin-5B + S-adenosyl-L-methionine = Co-precorrin-6A + S-adenosyl-L-homocysteine. The protein operates within cofactor biosynthesis; adenosylcobalamin biosynthesis; cob(II)yrinate a,c-diamide from sirohydrochlorin (anaerobic route): step 6/10. Functionally, catalyzes the methylation of C-1 in cobalt-precorrin-5B to form cobalt-precorrin-6A. This Methanococcoides burtonii (strain DSM 6242 / NBRC 107633 / OCM 468 / ACE-M) protein is Cobalt-precorrin-5B C(1)-methyltransferase.